Here is a 301-residue protein sequence, read N- to C-terminus: Tetrapeptide repeat homeobox protein 2 (301 aa).

2 disordered regions span residues 1 to 27 (MQDP…RTVY) and 273 to 301 (SLST…LLDL). Composition is skewed to basic and acidic residues over residues 16 to 26 (PPRRQRQERTV) and 281 to 292 (YKEEDGFVDKNH). The homeobox DNA-binding region spans 20 to 79 (QRQERTVYTESQQKVLEFYFQKDQYPNYDQRLNLAEMLSLREQQLQVWFKNRRAKLARER).

Belongs to the paired homeobox family.

The protein resides in the nucleus. Functionally, transcription factor expressed after fertilization required for zygotic genome activation (ZGA), a critical event in early embryonic development during which the developmental control passes from maternally provided mRNAs to the expression of the zygotic genome after fertilization. Binds and activates expression of key ZGA marker genes, such as NANOGNB, ZSCAN4, DUXB, KLF5 and DPPA3. Binds to regulatory DNA sequences containing a 5'-TAATCC-3' sequence motif. This is Tetrapeptide repeat homeobox protein 2 from Homo sapiens (Human).